The primary structure comprises 207 residues: Oligoribonuclease (207 aa).

Residues 20 to 183 enclose the Exonuclease domain; sequence LVWLDMEMTG…ADIHESIDEL (164 aa). Tyr-141 is an active-site residue.

Belongs to the oligoribonuclease family.

Its subcellular location is the cytoplasm. Its function is as follows. 3'-to-5' exoribonuclease specific for small oligoribonucleotides. The polypeptide is Oligoribonuclease (Paraburkholderia xenovorans (strain LB400)).